Here is a 724-residue protein sequence, read N- to C-terminus: 1,4-alpha-glucan branching enzyme GlgB 1 (724 aa).

The Nucleophile role is filled by Asp-403. Residue Glu-456 is the Proton donor of the active site.

Belongs to the glycosyl hydrolase 13 family. GlgB subfamily. In terms of assembly, monomer.

The enzyme catalyses Transfers a segment of a (1-&gt;4)-alpha-D-glucan chain to a primary hydroxy group in a similar glucan chain.. It functions in the pathway glycan biosynthesis; glycogen biosynthesis. In terms of biological role, catalyzes the formation of the alpha-1,6-glucosidic linkages in glycogen by scission of a 1,4-alpha-linked oligosaccharide from growing alpha-1,4-glucan chains and the subsequent attachment of the oligosaccharide to the alpha-1,6 position. The chain is 1,4-alpha-glucan branching enzyme GlgB 1 from Xanthomonas campestris pv. campestris (strain 8004).